The sequence spans 217 residues: Ribonuclease HII (217 aa).

An RNase H type-2 domain is found at 17–207; sequence KVIYGVDEAG…CVGQSVSGAR (191 aa). A divalent metal cation contacts are provided by Asp-23, Glu-24, and Asp-116.

The protein belongs to the RNase HII family. The cofactor is Mn(2+). Mg(2+) serves as cofactor.

Its subcellular location is the cytoplasm. It carries out the reaction Endonucleolytic cleavage to 5'-phosphomonoester.. In terms of biological role, endonuclease that specifically degrades the RNA of RNA-DNA hybrids. This chain is Ribonuclease HII, found in Nitrosomonas europaea (strain ATCC 19718 / CIP 103999 / KCTC 2705 / NBRC 14298).